We begin with the raw amino-acid sequence, 323 residues long: tRNA U34 carboxymethyltransferase (323 aa).

Carboxy-S-adenosyl-L-methionine is bound by residues K91, W105, K110, G130, I180 to E181, M196, Y200, and R315.

It belongs to the class I-like SAM-binding methyltransferase superfamily. CmoB family. Homotetramer.

The catalysed reaction is carboxy-S-adenosyl-L-methionine + 5-hydroxyuridine(34) in tRNA = 5-carboxymethoxyuridine(34) in tRNA + S-adenosyl-L-homocysteine + H(+). Its function is as follows. Catalyzes carboxymethyl transfer from carboxy-S-adenosyl-L-methionine (Cx-SAM) to 5-hydroxyuridine (ho5U) to form 5-carboxymethoxyuridine (cmo5U) at position 34 in tRNAs. The chain is tRNA U34 carboxymethyltransferase from Citrifermentans bemidjiense (strain ATCC BAA-1014 / DSM 16622 / JCM 12645 / Bem) (Geobacter bemidjiensis).